The following is a 207-amino-acid chain: MRYLVMMFALLVSVTLVSPRPANAVDNQLSVVDGQGRTLTVQQAETFLNGVFPLDRNRLTREWFHSGRATYHVAGPGADEFEGTLELGYQVGFPWSLGVGINFSYTTPNILIDGGDITQPPFGLDTIITPNLFPGVSISADLGNGPGIQEVATFSVDVKGAKGAVAVSNAHGTVTGAAGGVLLRPFARLIASTGDSVTTYGEPWNMN.

Residues 1-24 form the signal peptide; sequence MRYLVMMFALLVSVTLVSPRPANA.

It belongs to the mycobacterial porin (TC 1.B.24) family. Octamers. Probably forms a goblet with the wide end on the exterior of the outer membrane and a central channel. It is not known if mixed oligomers of MspD with other Msp subunits form in vivo.

The protein localises to the cell outer membrane. It localises to the secreted. It is found in the cell wall. Its function is as follows. A backup porin induced when MspA, the major porin, is deleted. It probably forms a water-filled channel which favors the permeation of cations. There are about 2400 porins in wild-type, 800 in an mspA deletion and 150 in a double mspA-mspC deletion. The sequence is that of Porin MspD (mspD) from Mycolicibacterium smegmatis (strain ATCC 700084 / mc(2)155) (Mycobacterium smegmatis).